The chain runs to 302 residues: Phospho-N-acetylmuramoyl-pentapeptide-transferase (302 aa).

10 helical membrane passes run 1 to 21, 42 to 62, 67 to 87, 95 to 115, 123 to 143, 154 to 174, 178 to 198, 204 to 224, 229 to 249, and 279 to 299; these read MIAA…KLFR, GTPT…GMIS, MVLL…FLSV, LKTY…LLLI, FFGS…LVIV, GLDG…WFFL, GVSE…LVFN, IFMG…VSVL, FYLV…ILQV, and IVAV…EIFG.

It belongs to the glycosyltransferase 4 family. MraY subfamily. Requires Mg(2+) as cofactor.

It localises to the cell inner membrane. It carries out the reaction UDP-N-acetyl-alpha-D-muramoyl-L-alanyl-gamma-D-glutamyl-meso-2,6-diaminopimeloyl-D-alanyl-D-alanine + di-trans,octa-cis-undecaprenyl phosphate = di-trans,octa-cis-undecaprenyl diphospho-N-acetyl-alpha-D-muramoyl-L-alanyl-D-glutamyl-meso-2,6-diaminopimeloyl-D-alanyl-D-alanine + UMP. It functions in the pathway cell wall biogenesis; peptidoglycan biosynthesis. Its function is as follows. Catalyzes the initial step of the lipid cycle reactions in the biosynthesis of the cell wall peptidoglycan: transfers peptidoglycan precursor phospho-MurNAc-pentapeptide from UDP-MurNAc-pentapeptide onto the lipid carrier undecaprenyl phosphate, yielding undecaprenyl-pyrophosphoryl-MurNAc-pentapeptide, known as lipid I. The sequence is that of Phospho-N-acetylmuramoyl-pentapeptide-transferase from Thermotoga maritima (strain ATCC 43589 / DSM 3109 / JCM 10099 / NBRC 100826 / MSB8).